Here is a 408-residue protein sequence, read N- to C-terminus: Cytotoxic granule-associated RNA binding protein tiar-1 (408 aa).

3 RRM domains span residues 46–121 (RTLY…WAVE), 135–213 (FHVF…WATR), and 241–312 (TSVY…WGKT).

Expressed in the germline and also in somatic tissues. Expressed in Ggonads and oocytes. Expression is slightly reduced in the most proximal oocytes, especially the -1 oocyte. Aggregates mostly in the head neurons, muscles, intestine, vulval and hypodermal cells during heat shock. Expressed only in the intestine as a response to heat shock, starvation and dietary restriction.

It localises to the cytoplasm. The protein resides in the nucleus. The protein localises to the stress granule. Acts downstream of ced-9 in the induction of germline apoptosis under different stress conditions including starvation, osmotic, oxidative, heat shock and UV stress. Plays a role in the formation of stress granules in response to heat shock and oxidative stress but not in response to osmotic stress. Required for the formation of stress granules in the core gonad but may not play a critical role in this process in the oocytes. Plays an important role in the formation of stress granules in the embryo. Protects female germ cells and embryos from heat shock. This chain is Cytotoxic granule-associated RNA binding protein tiar-1, found in Caenorhabditis elegans.